Here is a 267-residue protein sequence, read N- to C-terminus: Glutamate 5-kinase (267 aa).

ATP is bound at residue Lys14. 3 residues coordinate substrate: Ser54, Asp141, and Asn157. ATP-binding positions include 177–178 (SD) and 219–225 (TGGMLSK).

Belongs to the glutamate 5-kinase family.

Its subcellular location is the cytoplasm. The enzyme catalyses L-glutamate + ATP = L-glutamyl 5-phosphate + ADP. It functions in the pathway amino-acid biosynthesis; L-proline biosynthesis; L-glutamate 5-semialdehyde from L-glutamate: step 1/2. In terms of biological role, catalyzes the transfer of a phosphate group to glutamate to form L-glutamate 5-phosphate. This is Glutamate 5-kinase from Streptococcus agalactiae serotype Ia (strain ATCC 27591 / A909 / CDC SS700).